The chain runs to 389 residues: NADH-dependent butanol dehydrogenase A (389 aa).

It belongs to the iron-containing alcohol dehydrogenase family. In terms of assembly, homodimer.

The protein operates within alcohol metabolism; butanol biosynthesis. The sequence is that of NADH-dependent butanol dehydrogenase A (bdhA) from Clostridium acetobutylicum (strain ATCC 824 / DSM 792 / JCM 1419 / IAM 19013 / LMG 5710 / NBRC 13948 / NRRL B-527 / VKM B-1787 / 2291 / W).